We begin with the raw amino-acid sequence, 94 residues long: FXYD domain-containing ion transport regulator 6 (94 aa).

Positions 1 to 17 (METVLVLCSLLAPVVLA) are cleaved as a signal peptide. At 18-34 (SAAEKEKEKDPFYYDYQ) the chain is on the extracellular side. Residues 35 to 57 (TLRIGGLVFAVVLFSVGILLILS) form a helical membrane-spanning segment. The Cytoplasmic portion of the chain corresponds to 58 to 94 (RRCKCSFNQKPRAPGDEEAQVENLITTNAAEPQKAEN).

This sequence belongs to the FXYD family. In terms of assembly, regulatory subunit of the sodium/potassium-transporting ATPase which is composed of a catalytic alpha subunit, a non-catalytic beta subunit and an additional regulatory subunit. The regulatory subunit, a member of the FXYD protein family, modulates the enzymatic activity in a tissue- and isoform-specific way by changing affinities of the Na+/K+-ATPase toward Na(+), K(+) or ATP.

The protein localises to the cell membrane. In terms of biological role, associates with and regulates the activity of the sodium/potassium-transporting ATPase (NKA) which catalyzes the hydrolysis of ATP coupled with the exchange of Na(+) and K(+) ions across the plasma membrane. Reduces the apparent affinity for intracellular Na(+) with no change in the apparent affinity for extracellular K(+). In addition to modulating NKA kinetics, may also function as a regulator of NKA localization to the plasma membrane. The protein is FXYD domain-containing ion transport regulator 6 (Fxyd6) of Mus musculus (Mouse).